A 441-amino-acid chain; its full sequence is Xaa-Pro dipeptidase (441 aa).

Mn(2+)-binding residues include Asp-244, Asp-255, His-336, Glu-381, and Glu-420.

It belongs to the peptidase M24B family. Bacterial-type prolidase subfamily. Mn(2+) is required as a cofactor.

It carries out the reaction Xaa-L-Pro dipeptide + H2O = an L-alpha-amino acid + L-proline. Functionally, splits dipeptides with a prolyl residue in the C-terminal position. The sequence is that of Xaa-Pro dipeptidase from Xanthomonas axonopodis pv. citri (strain 306).